Reading from the N-terminus, the 214-residue chain is Large ribosomal subunit protein uL3 (214 aa).

Gln-153 carries the post-translational modification N5-methylglutamine.

It belongs to the universal ribosomal protein uL3 family. Part of the 50S ribosomal subunit. Forms a cluster with proteins L14 and L19. Post-translationally, methylated by PrmB.

One of the primary rRNA binding proteins, it binds directly near the 3'-end of the 23S rRNA, where it nucleates assembly of the 50S subunit. The chain is Large ribosomal subunit protein uL3 from Methylobacillus flagellatus (strain ATCC 51484 / DSM 6875 / VKM B-1610 / KT).